A 395-amino-acid chain; its full sequence is MGKGTVVLAYSGGLDTSICIPLLKEEYGYDRVVTVAADVGQRKEEISIAEEKGKRFADKHYTLDLIDQFVDRCLMPSIKANGLYEGYPMGTSLARPVIAEAVVEIAKKEDATAVAHGCTGKGNDQLRFDVVFRAADLEVIAPIRERNMTREWEIGYAEKHGIPVPVDKEKPWSVDENLWSRSIEGGKLEDPAFHPPEEIYAWTVSPLKAPDEPQVLSITFEAGIPVALDGKRMKGADLIRTVGQIAGGHGIGRNDMMENRVLGIKAREIYEHPAANVLLTAHADLERLVLTREEYAFKQSVDAKWAQLAYYGLIYEPLWDALNAFIDTTQKRVNGTVDVRLFKGSVTVLGRSSPDSFYSIDVASFDSTTIDQTDAIGYSMYYGLQARLVRKKQKK.

Residues 9–17 (AYSGGLDTS) and Ala-37 contribute to the ATP site. The L-citrulline site is built by Tyr-87 and Ser-92. Gly-117 contacts ATP. L-aspartate is bound by residues Thr-119, Asn-123, and Asp-124. Asn-123 lines the L-citrulline pocket. L-citrulline is bound by residues Arg-127, Ser-173, Ser-182, Glu-258, and Tyr-270.

The protein belongs to the argininosuccinate synthase family. Type 1 subfamily. As to quaternary structure, homotetramer.

The protein resides in the cytoplasm. The catalysed reaction is L-citrulline + L-aspartate + ATP = 2-(N(omega)-L-arginino)succinate + AMP + diphosphate + H(+). It functions in the pathway amino-acid biosynthesis; L-arginine biosynthesis; L-arginine from L-ornithine and carbamoyl phosphate: step 2/3. In Methanospirillum hungatei JF-1 (strain ATCC 27890 / DSM 864 / NBRC 100397 / JF-1), this protein is Argininosuccinate synthase.